The following is a 463-amino-acid chain: Glycine--tRNA ligase (463 aa).

Position 102 (R102) interacts with substrate. Positions 113–134 are disordered; that stretch reads KHGHPPPNGLADIRDPDTGEPG. Substrate is bound at residue E165. ATP contacts are provided by residues 197 to 199, 207 to 212, 284 to 285, and 328 to 331; these read RNE, FRTREF, EL, and GLTR. 212-216 serves as a coordination point for substrate; that stretch reads FEQME. 324–328 contributes to the substrate binding site; the sequence is EPAAG.

The protein belongs to the class-II aminoacyl-tRNA synthetase family. Homodimer.

Its subcellular location is the cytoplasm. The enzyme catalyses tRNA(Gly) + glycine + ATP = glycyl-tRNA(Gly) + AMP + diphosphate. Functionally, catalyzes the attachment of glycine to tRNA(Gly). This Mycolicibacterium paratuberculosis (strain ATCC BAA-968 / K-10) (Mycobacterium paratuberculosis) protein is Glycine--tRNA ligase.